A 558-amino-acid polypeptide reads, in one-letter code: Dihydroxy-acid dehydratase (558 aa).

Aspartate 78 is a Mg(2+) binding site. Residue cysteine 119 coordinates [2Fe-2S] cluster. Mg(2+) contacts are provided by aspartate 120 and lysine 121. Lysine 121 carries the N6-carboxylysine modification. Cysteine 192 contacts [2Fe-2S] cluster. Glutamate 446 provides a ligand contact to Mg(2+). Serine 472 (proton acceptor) is an active-site residue.

It belongs to the IlvD/Edd family. Homodimer. [2Fe-2S] cluster serves as cofactor. Requires Mg(2+) as cofactor.

The enzyme catalyses (2R)-2,3-dihydroxy-3-methylbutanoate = 3-methyl-2-oxobutanoate + H2O. It catalyses the reaction (2R,3R)-2,3-dihydroxy-3-methylpentanoate = (S)-3-methyl-2-oxopentanoate + H2O. Its pathway is amino-acid biosynthesis; L-isoleucine biosynthesis; L-isoleucine from 2-oxobutanoate: step 3/4. It participates in amino-acid biosynthesis; L-valine biosynthesis; L-valine from pyruvate: step 3/4. In terms of biological role, functions in the biosynthesis of branched-chain amino acids. Catalyzes the dehydration of (2R,3R)-2,3-dihydroxy-3-methylpentanoate (2,3-dihydroxy-3-methylvalerate) into 2-oxo-3-methylpentanoate (2-oxo-3-methylvalerate) and of (2R)-2,3-dihydroxy-3-methylbutanoate (2,3-dihydroxyisovalerate) into 2-oxo-3-methylbutanoate (2-oxoisovalerate), the penultimate precursor to L-isoleucine and L-valine, respectively. The sequence is that of Dihydroxy-acid dehydratase from Campylobacter jejuni subsp. jejuni serotype O:2 (strain ATCC 700819 / NCTC 11168).